A 328-amino-acid chain; its full sequence is D-cysteine desulfhydrase (328 aa).

Position 51 is an N6-(pyridoxal phosphate)lysine (Lys51).

The protein belongs to the ACC deaminase/D-cysteine desulfhydrase family. In terms of assembly, homodimer. It depends on pyridoxal 5'-phosphate as a cofactor.

It carries out the reaction D-cysteine + H2O = hydrogen sulfide + pyruvate + NH4(+) + H(+). Its function is as follows. Catalyzes the alpha,beta-elimination reaction of D-cysteine and of several D-cysteine derivatives. It could be a defense mechanism against D-cysteine. This Salmonella agona (strain SL483) protein is D-cysteine desulfhydrase.